The following is a 149-amino-acid chain: Transcriptional repressor NrdR (149 aa).

A zinc finger spans residues 3 to 34 (CPFCFAVDTKVIDSRLVGEGSSVRRRRQCLVC). The region spanning 49-139 (PRVVKSNDVR…VYRSFEDIRE (91 aa)) is the ATP-cone domain.

It belongs to the NrdR family. Zn(2+) is required as a cofactor.

Negatively regulates transcription of bacterial ribonucleotide reductase nrd genes and operons by binding to NrdR-boxes. The polypeptide is Transcriptional repressor NrdR (Cronobacter sakazakii (strain ATCC BAA-894) (Enterobacter sakazakii)).